The sequence spans 200 residues: Prolactin-2 (200 aa).

The signal sequence occupies residues 1-23; that stretch reads MRQRRISGSNLMMVLCVVAMCRA. 2 disulfide bridges follow: Cys-64–Cys-173 and Cys-190–Cys-200.

It belongs to the somatotropin/prolactin family.

It localises to the secreted. This Oreochromis mossambicus (Mozambique tilapia) protein is Prolactin-2 (prl2).